We begin with the raw amino-acid sequence, 354 residues long: MEKRIVCLAGDGVGPEVMESAKEVLHMVERLYGHHFHLQDEHFGGVAIDLTGQPLPQRTLAACLASDAVLLGAVGGPRWDGAKERPEKGLLALRKGLGVFANVRPVTVESETAHLSPLKKADEIDFVVVRELTGGIYFSYPKERTDEVATDTLTYHRHEIERIVSYAFQLASKRKKKVTSIDKANVLESSKLWRTVTEEVALRYPDVELEHILVDAAAMELIRNPGRFDVIVTENLFGDILSDEASVLAGSLGMLPSASHAEKGPSLYEPIHGSAPDIAGKNKANPIAMMRSVAMMLGQSFGLTREGCAIEEAISAVLKSGKCTEDIGGTETTTSFTKAVMQEMEEQALVGRGR.

76 to 87 (GPRWDGAKERPE) is a binding site for NAD(+). Residues Arg94, Arg104, Arg130, and Asp215 each contribute to the substrate site. Mg(2+) contacts are provided by Asp215, Asp239, and Asp243. 273-285 (GSAPDIAGKNKAN) is an NAD(+) binding site.

It belongs to the isocitrate and isopropylmalate dehydrogenases family. LeuB type 1 subfamily. In terms of assembly, homodimer. The cofactor is Mg(2+). Requires Mn(2+) as cofactor.

The protein resides in the cytoplasm. The catalysed reaction is (2R,3S)-3-isopropylmalate + NAD(+) = 4-methyl-2-oxopentanoate + CO2 + NADH. It functions in the pathway amino-acid biosynthesis; L-leucine biosynthesis; L-leucine from 3-methyl-2-oxobutanoate: step 3/4. In terms of biological role, catalyzes the oxidation of 3-carboxy-2-hydroxy-4-methylpentanoate (3-isopropylmalate) to 3-carboxy-4-methyl-2-oxopentanoate. The product decarboxylates to 4-methyl-2 oxopentanoate. The protein is 3-isopropylmalate dehydrogenase of Bacillus cereus (strain ZK / E33L).